The sequence spans 345 residues: Uroporphyrinogen decarboxylase (345 aa).

Residues 26-30, phenylalanine 45, aspartate 75, tyrosine 151, serine 206, and histidine 320 contribute to the substrate site; that span reads RQAGR.

This sequence belongs to the uroporphyrinogen decarboxylase family. As to quaternary structure, homodimer.

It localises to the cytoplasm. It catalyses the reaction uroporphyrinogen III + 4 H(+) = coproporphyrinogen III + 4 CO2. It functions in the pathway porphyrin-containing compound metabolism; protoporphyrin-IX biosynthesis; coproporphyrinogen-III from 5-aminolevulinate: step 4/4. Its function is as follows. Catalyzes the decarboxylation of four acetate groups of uroporphyrinogen-III to yield coproporphyrinogen-III. In Staphylococcus carnosus (strain TM300), this protein is Uroporphyrinogen decarboxylase.